The following is an 809-amino-acid chain: Protein PHOX3 (809 aa).

The tract at residues 1-22 (MEKQNEEISTDDAETSQSQLVD) is disordered. TPR repeat units follow at residues 126 to 159 (AQGL…LPKD), 164 to 199 (SHVR…TPDH), 200 to 233 (NKAL…DPKN), 235 to 265 (MASE…PPDY), and 274 to 311 (AALW…EKKN). Residues 288–339 (TKKSNQVEEKSEGEGEDVEPEKKNNVLAEKGKEKIKMKVKGKQSDKRSDTSK) form a disordered region. Ser298 is subject to Phosphoserine. Residues 307–339 (PEKKNNVLAEKGKEKIKMKVKGKQSDKRSDTSK) show a composition bias toward basic and acidic residues. One can recognise a PB1 domain in the interval 359–438 (NKDVKFVYSD…GTMRFYVVEV (80 aa)). 3 TPR repeats span residues 508 to 541 (SEAM…SLLN), 563 to 597 (ESVS…KPEC), and 615 to 648 (SWYY…IKKS). The disordered stretch occupies residues 656 to 686 (ETGKESEPSQAGKTDCLTHEKDLGSSTQNNP). The TPR 9 repeat unit spans residues 709-741 (SIMEYKLDQPFWRESLEAAMEKFELAGTCKDDV).

Its function is as follows. Carboxylate clamp type tetratricopeptide repeat protein that may act as a potential Hsp90/Hsp70 co-chaperone. Contributes to polar growth of root hairs. The sequence is that of Protein PHOX3 from Arabidopsis thaliana (Mouse-ear cress).